The following is a 430-amino-acid chain: Acylsugar acyltransferase 3 (430 aa).

Active-site proton acceptor residues include H155 and D367.

It belongs to the plant acyltransferase family. In terms of assembly, monomer. In terms of tissue distribution, expressed in tip cells of type I trichomes of stems and petioles, sites of acylsugars production.

In terms of biological role, catalyzes the transfer of short (four to five carbons) branched acyl chains to the furanose ring of di-acylsucrose acceptors to produce tri-acylsucroses such as S3:15 (5,5,5), S4:17 (2,5,5,5) and S4:24 (2,5,5,12) acylsucroses. This Solanum lycopersicum (Tomato) protein is Acylsugar acyltransferase 3.